The following is a 185-amino-acid chain: UPF0397 protein lhv_0999 (185 aa).

5 helical membrane passes run 11 to 31 (VVAMGIGSAIYVILTRFTSIP), 45 to 65 (FLALFAAIYGAKVGFAVGFIG), 72 to 92 (IMYGQTWWSWVLATGVLGLII), 111 to 131 (ILLFNIVQIFANIIAWIVVAP), and 145 to 165 (VFVQGISATLSNGITILVVGT).

This sequence belongs to the UPF0397 family.

It localises to the cell membrane. The chain is UPF0397 protein lhv_0999 from Lactobacillus helveticus (strain DPC 4571).